The chain runs to 623 residues: Kelch repeat and BTB domain-containing protein 12 (623 aa).

Residues 31-98 (IDVVLTAEGE…MYNAALEINN (68 aa)) enclose the BTB domain. Residues 133–235 (CLGIYYFAKQ…NPSFLRQALR (103 aa)) form the BACK domain. Kelch repeat units lie at residues 386–436 (DLYV…TVNN), 437–492 (KLYV…VVNS), 494–547 (IYVL…STNA), and 553–603 (KLYV…LVAR).

This is Kelch repeat and BTB domain-containing protein 12 (KBTBD12) from Homo sapiens (Human).